The following is a 643-amino-acid chain: Fructose-1,6-bisphosphatase class 3 (643 aa).

This sequence belongs to the FBPase class 3 family. The cofactor is Mn(2+).

It catalyses the reaction beta-D-fructose 1,6-bisphosphate + H2O = beta-D-fructose 6-phosphate + phosphate. The protein operates within carbohydrate biosynthesis; gluconeogenesis. The chain is Fructose-1,6-bisphosphatase class 3 from Lacticaseibacillus casei (strain BL23) (Lactobacillus casei).